The following is a 189-amino-acid chain: Dynactin subunit 6 (189 aa).

It belongs to the dynactin subunits 5/6 family. Dynactin subunit 6 subfamily. As to quaternary structure, subunit of dynactin, a multiprotein complex part of a tripartite complex with dynein and a adapter, such as BICDL1, BICD2 or HOOK3. The dynactin complex is built around ACTR1A/ACTB filament and consists of an actin-related filament composed of a shoulder domain, a pointed end and a barbed end.

The protein resides in the cytoplasm. It localises to the cytoskeleton. In terms of biological role, part of the dynactin complex that activates the molecular motor dynein for ultra-processive transport along microtubules. This chain is Dynactin subunit 6 (dynF), found in Dictyostelium discoideum (Social amoeba).